Here is a 380-residue protein sequence, read N- to C-terminus: GATOR1 complex protein NPRL2 (380 aa).

Residues 1 to 133 (MGSGCRIECI…SKQKLVPIMT (133 aa)) form an interaction with PDPK1 region. Arg-78 lines the GDP pocket. Arg-78 carries the asymmetric dimethylarginine modification. Residues Lys-158 and Lys-357 each participate in a glycyl lysine isopeptide (Lys-Gly) (interchain with G-Cter in ubiquitin) cross-link.

It belongs to the NPR2 family. In terms of assembly, within the GATOR complex, component of the GATOR1 subcomplex, made of DEPDC5, NPRL2 and NPRL3. GATOR1 mediates the strong interaction of the GATOR complex with small GTPases Rag (RagA/RRAGA, RagB/RRAGB, RagC/RRAGC and/or RagD/RRAGD) heterodimers. GATOR1 interacts with GPR155/LYCHOS; interaction takes place in presence of cholesterol and prevents interaction between GATOR1 and KICSTOR. Interacts with PDPK1. In terms of processing, in the presence of abundant amino acids, ubiquitinated at Lys-158 and Lys-357 via 'Lys-6'-linked ubiquitination by the WDR24 component of the GATOR2 complex, thereby inhibiting the GATOR1 complex and promoting mTORC1 activation. Post-translationally, asymmetric dimethylation at Arg-78 by PRMT1 inhibits the GTPase activator activity of the GATOR1 complex and consequently inducing timely mTORC1 activation under methionine-sufficient conditions. In terms of tissue distribution, most abundant in skeletal muscle, followed by brain, liver and pancreas, with lower amounts in lung, kidney, placenta and heart. Expressed in the frontal lobe cortex as well as in the temporal, parietal, and occipital lobes. Expressed in most lung cancer cell lines tested.

Its subcellular location is the lysosome membrane. Functionally, catalytic component of the GATOR1 complex, a multiprotein complex that functions as an inhibitor of the amino acid-sensing branch of the mTORC1 pathway. In response to amino acid depletion, the GATOR1 complex has GTPase activating protein (GAP) activity and strongly increases GTP hydrolysis by RagA/RRAGA (or RagB/RRAGB) within heterodimeric Rag complexes, thereby turning them into their inactive GDP-bound form, releasing mTORC1 from lysosomal surface and inhibiting mTORC1 signaling. In the presence of abundant amino acids, the GATOR1 complex is ubiquitinated and inhibited by GATOR2. Within the GATOR1 complex, NPRL2 constitutes the catalytic subunit that mediates the GTPase activator activity and under methionine-sufficient conditions, the GTPase activator activity is inhibited by PRMT1 through methylation and consequently inducing timely mTORC1 activation. Suppresses Src-dependent tyrosine phosphorylation and activation of PDPK1 and its downstream signaling. Down-regulates PDPK1 kinase activity by interfering with tyrosine phosphorylation at 'Tyr-9', 'Tyr-373' and 'Tyr-376' residues. May act as a tumor suppressor. Suppresses cell growth and enhances sensitivity to various anticancer drugs. This Homo sapiens (Human) protein is GATOR1 complex protein NPRL2.